Consider the following 106-residue polypeptide: MADWNGEYISPYAEHGKKSEQVKKITVSIPLKVLKVLTDERTRRQINNLRHATNSELLCEAFLHAYTGQPLPTDEDLRKDRPDDIPTEVKKLMTEMGIEFEAFDEE.

Belongs to the MetJ family. Homodimer.

It localises to the cytoplasm. Functionally, this regulatory protein, when combined with SAM (S-adenosylmethionine) represses the expression of the methionine regulon and of enzymes involved in SAM synthesis. The protein is Met repressor of Vibrio atlanticus (strain LGP32) (Vibrio splendidus (strain Mel32)).